A 483-amino-acid polypeptide reads, in one-letter code: Dual specificity protein phosphatase 10 (483 aa).

In terms of domain architecture, Rhodanese spans 169-286; sequence PSQGPVIIDC…FKQNHGNLCD (118 aa). The segment at 200 to 216 is interaction with MAP kinases; sequence KISRRRLQQGKITVLDL. The Tyrosine-protein phosphatase domain maps to 322–465; that stretch reads ELTPILPFLF…LLEFEEDLNN (144 aa). Residue C409 is the Phosphocysteine intermediate of the active site.

Belongs to the protein-tyrosine phosphatase family. Non-receptor class dual specificity subfamily. Monomer. Interacts with MAPK14.

It is found in the cytoplasm. Its subcellular location is the nucleus. It carries out the reaction O-phospho-L-tyrosyl-[protein] + H2O = L-tyrosyl-[protein] + phosphate. The enzyme catalyses O-phospho-L-seryl-[protein] + H2O = L-seryl-[protein] + phosphate. The catalysed reaction is O-phospho-L-threonyl-[protein] + H2O = L-threonyl-[protein] + phosphate. Protein phosphatase involved in the inactivation of MAP kinases. Has a specificity for the MAPK11/MAPK12/MAPK13/MAPK14 subfamily. It preferably dephosphorylates p38. The polypeptide is Dual specificity protein phosphatase 10 (Dusp10) (Mus musculus (Mouse)).